Reading from the N-terminus, the 381-residue chain is Neuropeptide Y receptor type 2 (381 aa).

A disordered region spans residues 1–37 (MGPVGAEADENQTVEVKVEPYGPGHTTPRGELPPDPE). The Extracellular portion of the chain corresponds to 1–51 (MGPVGAEADENQTVEVKVEPYGPGHTTPRGELPPDPEPELIDSTKLVEVQV). Asn-11 is a glycosylation site (N-linked (GlcNAc...) asparagine). The helical transmembrane segment at 52-72 (ILILAYCSIILLGVVGNSLVI) threads the bilayer. The Cytoplasmic portion of the chain corresponds to 73 to 86 (HVVIKFKSMRTVTN). A helical membrane pass occupies residues 87 to 107 (FFIANLAVADLLVNTLCLPFT). Topologically, residues 108-124 (LTYTLMGEWKMGPVLCH) are extracellular. Cys-123 and Cys-203 form a disulfide bridge. A helical transmembrane segment spans residues 125–145 (LVPYAQGLAVQVSTITLTVIA). Over 146–165 (LDRHRCIVYHLESKISKRIS) the chain is Cytoplasmic. The helical transmembrane segment at 166–186 (FLIIGLAWGISALLASPLAIF) threads the bilayer. Residues 187–216 (REYSLIEIIPDFEIVACTEKWPGEEKSVYG) lie on the Extracellular side of the membrane. A helical transmembrane segment spans residues 217–237 (TVYSLSTLLILYVLPLGIISF). Residues 238–268 (SYTRIWSKLRNHVSPGAASDHYHQRRHKMTK) lie on the Cytoplasmic side of the membrane. The chain crosses the membrane as a helical span at residues 269–289 (MLVCVVVVFAVSWLPLHAFQL). Residues 290–304 (AVDIDSHVLDLKEYK) are Extracellular-facing. The helical transmembrane segment at 305 to 325 (LIFTVFHIIAMCSTFANPLLY) threads the bilayer. Residues 326-381 (GWMNSNYRKAFLSAFRCEQRLDAIHSEVSMTFKAKKNLEVKKNNGPTDSFSEATNV) are Cytoplasmic-facing. Cys-342 carries the S-palmitoyl cysteine lipid modification.

Belongs to the G-protein coupled receptor 1 family.

It localises to the cell membrane. Functionally, receptor for neuropeptide Y and peptide YY. The sequence is that of Neuropeptide Y receptor type 2 (Npy2r) from Mus musculus (Mouse).